The primary structure comprises 408 residues: Argininosuccinate synthase (408 aa).

Residues 11 to 19 (AYSGGLDTS) and Ala-38 each bind ATP. Positions 91 and 96 each coordinate L-citrulline. Gly-121 contributes to the ATP binding site. The L-aspartate site is built by Thr-123, Asn-127, and Asp-128. Asn-127 is an L-citrulline binding site. Residues Arg-131, Ser-182, Ser-191, Glu-267, and Tyr-279 each coordinate L-citrulline.

This sequence belongs to the argininosuccinate synthase family. Type 1 subfamily. As to quaternary structure, homotetramer.

It is found in the cytoplasm. The enzyme catalyses L-citrulline + L-aspartate + ATP = 2-(N(omega)-L-arginino)succinate + AMP + diphosphate + H(+). It participates in amino-acid biosynthesis; L-arginine biosynthesis; L-arginine from L-ornithine and carbamoyl phosphate: step 2/3. This is Argininosuccinate synthase from Paracoccus denitrificans (strain Pd 1222).